The sequence spans 470 residues: Box C/D snoRNA protein 1 (470 aa).

Residues 1-70 (MEFAAENEGK…EEGSGQRPEE (70 aa)) are disordered. Residue Ser-25 is modified to Phosphoserine. A compositionally biased stretch (gly residues) spans 41-51 (EFGGGEEGTGL). Residues Lys-79, Lys-108, Lys-118, Lys-138, Lys-143, Lys-153, Lys-162, Lys-173, Lys-183, and Lys-200 each participate in a glycyl lysine isopeptide (Lys-Gly) (interchain with G-Cter in SUMO2) cross-link. Zn(2+) contacts are provided by Cys-220, Cys-223, Cys-232, Cys-235, Cys-240, Cys-244, His-248, and Cys-254. Residues 220-254 (CETCGTEEAKYRCPRCMRYSCSLPCVKKHKAELTC) form an HIT-type zinc finger. Lys-459 is covalently cross-linked (Glycyl lysine isopeptide (Lys-Gly) (interchain with G-Cter in SUMO2)).

The protein belongs to the BCD1 family. In terms of assembly, interacts with FBL, SNU13, NOP58, NUFIP1, RUVBL1, RUVBL2 and TAF9. Interacts (via HIT-type zinc finger) with the RUVBL1/RUVBL2 complex in the presence of ADP.

In terms of biological role, required for box C/D snoRNAs accumulation involved in snoRNA processing, snoRNA transport to the nucleolus and ribosome biogenesis. The protein is Box C/D snoRNA protein 1 (ZNHIT6) of Homo sapiens (Human).